The chain runs to 349 residues: Anthranilate phosphoribosyltransferase (349 aa).

Residues glycine 82, 85 to 86 (GD), 92 to 95 (NVST), 110 to 118 (KHGNRAVSG), and serine 122 each bind 5-phospho-alpha-D-ribose 1-diphosphate. An anthranilate-binding site is contributed by glycine 82. A Mg(2+)-binding site is contributed by serine 94. Asparagine 113 lines the anthranilate pocket. Position 168 (arginine 168) interacts with anthranilate. Aspartate 227 and glutamate 228 together coordinate Mg(2+).

It belongs to the anthranilate phosphoribosyltransferase family. As to quaternary structure, homodimer. Requires Mg(2+) as cofactor.

It carries out the reaction N-(5-phospho-beta-D-ribosyl)anthranilate + diphosphate = 5-phospho-alpha-D-ribose 1-diphosphate + anthranilate. It functions in the pathway amino-acid biosynthesis; L-tryptophan biosynthesis; L-tryptophan from chorismate: step 2/5. Its function is as follows. Catalyzes the transfer of the phosphoribosyl group of 5-phosphorylribose-1-pyrophosphate (PRPP) to anthranilate to yield N-(5'-phosphoribosyl)-anthranilate (PRA). In Pseudomonas putida (strain ATCC 47054 / DSM 6125 / CFBP 8728 / NCIMB 11950 / KT2440), this protein is Anthranilate phosphoribosyltransferase.